The sequence spans 185 residues: ATP synthase subunit b 2 (185 aa).

A disordered region spans residues 1-23; sequence MAEGHGDAKGATAHTAADGGHKA. The segment covering 9–18 has biased composition (low complexity); the sequence is KGATAHTAAD. Residues 37-57 traverse the membrane as a helical segment; sequence LVSLTIAFVALYLIVSKIILP.

The protein belongs to the ATPase B chain family. F-type ATPases have 2 components, F(1) - the catalytic core - and F(0) - the membrane proton channel. F(1) has five subunits: alpha(3), beta(3), gamma(1), delta(1), epsilon(1). F(0) has three main subunits: a(1), b(2) and c(10-14). The alpha and beta chains form an alternating ring which encloses part of the gamma chain. F(1) is attached to F(0) by a central stalk formed by the gamma and epsilon chains, while a peripheral stalk is formed by the delta and b chains.

It localises to the cell inner membrane. Its function is as follows. F(1)F(0) ATP synthase produces ATP from ADP in the presence of a proton or sodium gradient. F-type ATPases consist of two structural domains, F(1) containing the extramembraneous catalytic core and F(0) containing the membrane proton channel, linked together by a central stalk and a peripheral stalk. During catalysis, ATP synthesis in the catalytic domain of F(1) is coupled via a rotary mechanism of the central stalk subunits to proton translocation. Functionally, component of the F(0) channel, it forms part of the peripheral stalk, linking F(1) to F(0). The b'-subunit is a diverged and duplicated form of b found in plants and photosynthetic bacteria. The polypeptide is ATP synthase subunit b 2 (atpF2) (Rhodopseudomonas palustris (strain BisB5)).